A 219-amino-acid polypeptide reads, in one-letter code: Thiamine-phosphate synthase (219 aa).

4-amino-2-methyl-5-(diphosphooxymethyl)pyrimidine is bound by residues 44-48 (QLREK) and N79. Residues D80 and D99 each coordinate Mg(2+). S117 contributes to the 4-amino-2-methyl-5-(diphosphooxymethyl)pyrimidine binding site. 143-145 (TST) provides a ligand contact to 2-[(2R,5Z)-2-carboxy-4-methylthiazol-5(2H)-ylidene]ethyl phosphate. Residue K146 coordinates 4-amino-2-methyl-5-(diphosphooxymethyl)pyrimidine. Residues G175 and 195–196 (IS) each bind 2-[(2R,5Z)-2-carboxy-4-methylthiazol-5(2H)-ylidene]ethyl phosphate.

Belongs to the thiamine-phosphate synthase family. Mg(2+) is required as a cofactor.

It catalyses the reaction 2-[(2R,5Z)-2-carboxy-4-methylthiazol-5(2H)-ylidene]ethyl phosphate + 4-amino-2-methyl-5-(diphosphooxymethyl)pyrimidine + 2 H(+) = thiamine phosphate + CO2 + diphosphate. The catalysed reaction is 2-(2-carboxy-4-methylthiazol-5-yl)ethyl phosphate + 4-amino-2-methyl-5-(diphosphooxymethyl)pyrimidine + 2 H(+) = thiamine phosphate + CO2 + diphosphate. It carries out the reaction 4-methyl-5-(2-phosphooxyethyl)-thiazole + 4-amino-2-methyl-5-(diphosphooxymethyl)pyrimidine + H(+) = thiamine phosphate + diphosphate. It functions in the pathway cofactor biosynthesis; thiamine diphosphate biosynthesis; thiamine phosphate from 4-amino-2-methyl-5-diphosphomethylpyrimidine and 4-methyl-5-(2-phosphoethyl)-thiazole: step 1/1. Condenses 4-methyl-5-(beta-hydroxyethyl)thiazole monophosphate (THZ-P) and 2-methyl-4-amino-5-hydroxymethyl pyrimidine pyrophosphate (HMP-PP) to form thiamine monophosphate (TMP). The polypeptide is Thiamine-phosphate synthase (Bacillus mycoides (strain KBAB4) (Bacillus weihenstephanensis)).